Consider the following 224-residue polypeptide: Probable septum site-determining protein MinC (224 aa).

The protein belongs to the MinC family. In terms of assembly, interacts with MinD and FtsZ.

Functionally, cell division inhibitor that blocks the formation of polar Z ring septums. Rapidly oscillates between the poles of the cell to destabilize FtsZ filaments that have formed before they mature into polar Z rings. Prevents FtsZ polymerization. This is Probable septum site-determining protein MinC from Shewanella amazonensis (strain ATCC BAA-1098 / SB2B).